Here is a 119-residue protein sequence, read N- to C-terminus: Large ribosomal subunit protein bL20 (119 aa).

Belongs to the bacterial ribosomal protein bL20 family.

Its function is as follows. Binds directly to 23S ribosomal RNA and is necessary for the in vitro assembly process of the 50S ribosomal subunit. It is not involved in the protein synthesizing functions of that subunit. This is Large ribosomal subunit protein bL20 from Treponema denticola (strain ATCC 35405 / DSM 14222 / CIP 103919 / JCM 8153 / KCTC 15104).